A 248-amino-acid polypeptide reads, in one-letter code: PF03932 family protein CutC (248 aa).

It belongs to the CutC family. In terms of assembly, homodimer.

The protein resides in the cytoplasm. The chain is PF03932 family protein CutC from Salmonella heidelberg (strain SL476).